Consider the following 299-residue polypeptide: Cathepsin B-like CP3 (299 aa).

An N-terminal signal peptide occupies residues 1–19; sequence MKLFLLAAAAFSAPALTVS. 3 disulfides stabilise this stretch: cysteine 87–cysteine 114, cysteine 97–cysteine 140, and cysteine 133–cysteine 176. The active site involves cysteine 100. Catalysis depends on residues histidine 244 and asparagine 265.

It belongs to the peptidase C1 family.

Its subcellular location is the vacuole. Its function is as follows. Thiol protease which is required for parasite excystation and invasion of the proximal small intestine of the human host. In Giardia intestinalis (Giardia lamblia), this protein is Cathepsin B-like CP3 (CP3).